The primary structure comprises 429 residues: Probable alcohol acetyltransferase orf1 (429 aa).

This sequence belongs to the alcohol acetyltransferase FCK4 family.

It functions in the pathway secondary metabolite biosynthesis. Its function is as follows. Probable alcohol acetyltransferase; part of the gene cluster that mediates the biosynthesis of the glycolipid biosurfactant ustilagic acid (UA). UA is a secreted cellobiose glycolipid that is toxic for many microorganisms and confers biocontrol activity to U.maydis. UA consists of 15,16-dihydroxypalmitic or 2,15,16-trihydroxypalmitic acid, which is O-glycosidically linked to cellobiose at its terminal hydroxyl group. In addition, the cellobiose moiety is acetylated and acylated with a short-chain hydroxy fatty acid. UA biosynthesis starts with omega-hydroxylation of palmitic acid catalyzed by the cytochrome P450 monooxygenase cyp1. Terminal hydroxylation of palmitic acid precedes subterminal hydroxylation catalyzed by the cytochrome P450 monooxygenase cyp2. Sequential glucosylation of the hydroxy fatty acid is probably catalyzed by the glycosyltransferase ugt1. The cellobiose lipid is further decorated by acetylation of the proximal glucose residue and by acylation with a short-chain beta-hydroxy fatty acid at the distal glucose residue. The acyltransferase uat1 may be a good candidate for catalyzing either acetylation or acylation of the cellobiose lipid. The fatty acid synthase fas2 may be involved in synthesis of the carbon backbone of the short-chain beta-hydroxy fatty acid esterified to the cellobiose disaccharide. The secreted UA consists of a mixture of both alpha-hydroxylated and non-hydroxylated glycolipids; therefore, alpha-hydroxylation of the long-chain fatty, catalyzed by the fatty acid hydroxylase ahd1, occurs late in UA biosynthesis and may be the last step before secretion. The chain is Probable alcohol acetyltransferase orf1 from Mycosarcoma maydis (Corn smut fungus).